Reading from the N-terminus, the 402-residue chain is Argininosuccinate synthase (402 aa).

ATP is bound by residues 10–18 and alanine 37; that span reads AYSGGLDTS. 2 residues coordinate L-citrulline: tyrosine 88 and serine 93. ATP is bound at residue glycine 118. L-aspartate-binding residues include threonine 120, asparagine 124, and aspartate 125. Asparagine 124 is a binding site for L-citrulline. Residues arginine 128, serine 179, serine 188, glutamate 264, and tyrosine 276 each contribute to the L-citrulline site.

Belongs to the argininosuccinate synthase family. Type 1 subfamily. As to quaternary structure, homotetramer.

It is found in the cytoplasm. It catalyses the reaction L-citrulline + L-aspartate + ATP = 2-(N(omega)-L-arginino)succinate + AMP + diphosphate + H(+). It functions in the pathway amino-acid biosynthesis; L-arginine biosynthesis; L-arginine from L-ornithine and carbamoyl phosphate: step 2/3. The protein is Argininosuccinate synthase of Alkalilimnicola ehrlichii (strain ATCC BAA-1101 / DSM 17681 / MLHE-1).